Here is a 117-residue protein sequence, read N- to C-terminus: Large ribosomal subunit protein bL20c (117 aa).

It belongs to the bacterial ribosomal protein bL20 family.

Its subcellular location is the plastid. Binds directly to 23S ribosomal RNA and is necessary for the in vitro assembly process of the 50S ribosomal subunit. It is not involved in the protein synthesizing functions of that subunit. The protein is Large ribosomal subunit protein bL20c (rpl20) of Euglena longa (Euglenophycean alga).